The sequence spans 62 residues: Translational regulator CsrA (62 aa).

It belongs to the CsrA/RsmA family. As to quaternary structure, homodimer; the beta-strands of each monomer intercalate to form a hydrophobic core, while the alpha-helices form wings that extend away from the core.

Its subcellular location is the cytoplasm. Its function is as follows. A key translational regulator that binds mRNA to regulate translation initiation and/or mRNA stability. Mediates global changes in gene expression, shifting from rapid growth to stress survival by linking envelope stress, the stringent response and the catabolite repression systems. Usually binds in the 5'-UTR; binding at or near the Shine-Dalgarno sequence prevents ribosome-binding, repressing translation, binding elsewhere in the 5'-UTR can activate translation and/or stabilize the mRNA. Its function is antagonized by small RNA(s). This chain is Translational regulator CsrA, found in Idiomarina loihiensis (strain ATCC BAA-735 / DSM 15497 / L2-TR).